The following is a 211-amino-acid chain: FMN-dependent NADH:quinone oxidoreductase 3 (211 aa).

102-105 contributes to the FMN binding site; the sequence is MWNF.

The protein belongs to the azoreductase type 1 family. In terms of assembly, homodimer. It depends on FMN as a cofactor.

The enzyme catalyses 2 a quinone + NADH + H(+) = 2 a 1,4-benzosemiquinone + NAD(+). It catalyses the reaction N,N-dimethyl-1,4-phenylenediamine + anthranilate + 2 NAD(+) = 2-(4-dimethylaminophenyl)diazenylbenzoate + 2 NADH + 2 H(+). In terms of biological role, quinone reductase that provides resistance to thiol-specific stress caused by electrophilic quinones. Its function is as follows. Also exhibits azoreductase activity. Catalyzes the reductive cleavage of the azo bond in aromatic azo compounds to the corresponding amines. The sequence is that of FMN-dependent NADH:quinone oxidoreductase 3 from Bacillus anthracis.